A 647-amino-acid chain; its full sequence is MPKIIELPEVLANQIAAGEVVERPASVVKELVENAIDAGSTQITIEVEESGLSKIQITDNGEGMAQADVAMSLRRHATSKIKNQGDLFRIRTLGFRGEALPSIASISHLTIVTAADGEVYGTKLVAKGGEIESQDPISTPVGTKITVENLFYNTPARLKYMKSLQAELAHIVDVVNRLSLAHPEVAFTLLNDGRQLTQTSGTGDLRQAIAGIYGLTTAKKMVEISNSDLDFEVSGYVSLPELTRANRNYITILINGRYIKNFLLNRAIFDGYGSKLMVGRFPIAVIDIQIDPYLADVNVHPTKQEVRISKEKELMALIKSAIAQSLREQDLIPDALENLAKSSTRGATRSVQTSLPLKQTNLYYDSSRNDFFVTPETVQEDIKPLVSKSESSVSLVANKQQPTVKQAKRSADDSDSEHGKLDYKNKSKLKRMLENLTNEETSTFPELEFFGQMHGTYLFAQGQGGLYIIDQHAAQERVKYEYYREKIGVVDSSLQQLLVPYLFEFSGSDYISLQEKMPLLNQVCIYLEPYGNNTFILREHPIWMKEEEIESAVYEMCDMLLLTNEVSVKTYRAELAIMMSCKRSIKANHALDDYSARDLLVQLAQCKNPYNCPHGRPVLVNFTKSDMEKMFRRIQENHTSLRDLGKY.

Positions 393–423 (VSLVANKQQPTVKQAKRSADDSDSEHGKLDY) are disordered. The segment covering 409-423 (RSADDSDSEHGKLDY) has biased composition (basic and acidic residues).

The protein belongs to the DNA mismatch repair MutL/HexB family.

Its function is as follows. This protein is involved in the repair of mismatches in DNA. It is required for dam-dependent methyl-directed DNA mismatch repair. May act as a 'molecular matchmaker', a protein that promotes the formation of a stable complex between two or more DNA-binding proteins in an ATP-dependent manner without itself being part of a final effector complex. The polypeptide is DNA mismatch repair protein MutL (Streptococcus thermophilus (strain CNRZ 1066)).